Reading from the N-terminus, the 85-residue chain is Alpha-defensin 14 (85 aa).

The first 11 residues, 1-11 (ALVLLAFQVQA), serve as a signal peptide directing secretion. Positions 12 to 50 (DPIQNTDEETKTEEQPGEDDQAVSVSFGDPEGSSLQEES) are excised as a propeptide. Residues 13–48 (PIQNTDEETKTEEQPGEDDQAVSVSFGDPEGSSLQE) form a disordered region. 3 disulfides stabilise this stretch: Cys-56-Cys-84, Cys-58-Cys-73, and Cys-63-Cys-83.

It belongs to the alpha-defensin family. As to expression, paneth cells of the small bowel.

It is found in the secreted. Probably contributes to the antimicrobial barrier function of the small bowel mucosa. This is Alpha-defensin 14 (Defa14) from Mus musculus (Mouse).